Reading from the N-terminus, the 289-residue chain is Elongation factor Ts (289 aa).

The interval 82–85 is involved in Mg(2+) ion dislocation from EF-Tu; that stretch reads TDFL.

Belongs to the EF-Ts family.

The protein resides in the cytoplasm. In terms of biological role, associates with the EF-Tu.GDP complex and induces the exchange of GDP to GTP. It remains bound to the aminoacyl-tRNA.EF-Tu.GTP complex up to the GTP hydrolysis stage on the ribosome. The chain is Elongation factor Ts from Pseudomonas aeruginosa (strain LESB58).